A 333-amino-acid chain; its full sequence is Terpene synthase 2 (333 aa).

The short motif at D82–T87 is the DDxx(x)D/E motif element. Residues N219–E227 carry the NDxxSxxxD/E motif motif.

It belongs to the terpene synthase family.

The enzyme catalyses (2E,6E)-farnesyl diphosphate = (E)-beta-farnesene + diphosphate. The catalysed reaction is (2E,6E)-farnesyl diphosphate = (1S,2S,4R)-beta-elemene + diphosphate. In terms of biological role, terpene synthase that converts its substrate farnesyl diphosphate (FPP) into the sesquiterpene (E)-beta-farnesene as major product. Is also able to convert FPP into delta-elemene, beta-elemene, (E)-beta-caryophyllene, 9-epi-(E)-caryophyllene, and a yet unidentified sesquiterpene. The protein is Terpene synthase 2 of Dictyostelium purpureum (Slime mold).